Reading from the N-terminus, the 520-residue chain is Beta-galactoside-specific lectin 4 (520 aa).

Asn-107 carries an N-linked (GlcNAc...) asparagine glycan. Glu-159 is an active-site residue. A disulfide bridge connects residues Cys-240 and Cys-266. The propeptide at 241-265 (GERPSSSDVRYWPLVIRPVIADDVT) is connecting peptide. One can recognise a Ricin B-type lectin 1 domain in the interval 269-396 (SEPTVRIVGR…YTLGQGWLAG (128 aa)). Residue 284–286 (DVR) coordinates D-galactose. Asn-322 carries N-linked (GlcNAc...) asparagine glycosylation. Cysteines 325 and 342 form a disulfide. Residues Asn-357 and Asn-397 are each glycosylated (N-linked (GlcNAc...) asparagine). A Ricin B-type lectin 2 domain is found at 400 to 520 (APREVTIYGF…KPNQMWLPVP (121 aa)). Intrachain disulfides connect Cys-413–Cys-426 and Cys-451–Cys-467. 494-496 (DVA) is a binding site for D-galactose.

This sequence belongs to the ribosome-inactivating protein family. Type 2 RIP subfamily. In terms of assembly, disulfide-linked dimer of A and B chains.

It catalyses the reaction Endohydrolysis of the N-glycosidic bond at one specific adenosine on the 28S rRNA.. The A chain is responsible for inhibiting protein synthesis through the catalytic inactivation of 60S ribosomal subunits by removing adenine from position 4,324 of 28S rRNA. The B chain binds to cell receptors and probably facilitates the entry into the cell of the A chain; B chains are also responsible for cell agglutination (lectin activity). Inhibits growth of the human tumor cell line Molt4. This Viscum album (European mistletoe) protein is Beta-galactoside-specific lectin 4.